Consider the following 844-residue polypeptide: Lysine-specific histone demethylase 1 homolog 1 (844 aa).

The segment covering 1–18 (MSTETKETRPETKPEDLG) has biased composition (basic and acidic residues). A disordered region spans residues 1 to 131 (MSTETKETRP…PGPRARKRRR (131 aa)). The span at 26–40 (PGEEPLGELIADDVN) shows a compositional bias: acidic residues. 2 stretches are compositionally biased toward polar residues: residues 46 to 62 (ASAT…QSEQ) and 107 to 118 (DLVTEQQSQNPN). Residues 154 to 255 (GKEVDSEALI…FGLAPVIKEA (102 aa)) form the SWIRM domain. Positions 295, 297, and 303 each coordinate FAD. Residues 516-523 (LKKGSIEF) carry the Nuclear localization signal motif. Glutamate 679 serves as a coordination point for FAD.

This sequence belongs to the flavin monoamine oxidase family. In terms of assembly, interacts with CZS. Interacts with OTU6/OTLD1. Requires FAD as cofactor. Expressed in the shoot and root apical regions of young seedlings. Expressed in cotyledons and inflorescences.

It is found in the nucleus. Its subcellular location is the cytoplasm. Probable histone demethylase that reduces the levels of histone H3 'Lys-4' methylation in chromatin of the floral repressor FLOWERING LOCUS C (FLC) and the sporophytically silenced floral repressor FWA. Seems to act in partial redundancy with FLOWERING LOCUS D (FLD) to repress FLC expression. Required for cytosine methylation of FWA. Controls primary seed dormancy by regulating DOG1 and abscisic acid signaling-related genes. In association with OTU6/OTLD1, involved in transcriptional gene repression via histone deubiquitination and demethylation. This Arabidopsis thaliana (Mouse-ear cress) protein is Lysine-specific histone demethylase 1 homolog 1.